Reading from the N-terminus, the 213-residue chain is FMN-dependent NADH:quinone oxidoreductase 1 (213 aa).

18–20 is an FMN binding site; sequence SVS.

The protein belongs to the azoreductase type 1 family. Homodimer. It depends on FMN as a cofactor.

The catalysed reaction is 2 a quinone + NADH + H(+) = 2 a 1,4-benzosemiquinone + NAD(+). The enzyme catalyses N,N-dimethyl-1,4-phenylenediamine + anthranilate + 2 NAD(+) = 2-(4-dimethylaminophenyl)diazenylbenzoate + 2 NADH + 2 H(+). Its function is as follows. Quinone reductase that provides resistance to thiol-specific stress caused by electrophilic quinones. Functionally, also exhibits azoreductase activity. Catalyzes the reductive cleavage of the azo bond in aromatic azo compounds to the corresponding amines. This is FMN-dependent NADH:quinone oxidoreductase 1 from Bacillus cereus (strain ATCC 10987 / NRS 248).